Consider the following 889-residue polypeptide: Coatomer subunit gamma-2 (889 aa).

5 HEAT repeats span residues valine 67–alanine 102, aspartate 103–leucine 140, arginine 289–leucine 326, valine 328–glutamate 360, and serine 361–leucine 398. The tract at residues proline 596–proline 617 is disordered.

The protein belongs to the COPG family. Oligomeric complex that consists of at least the alpha, beta, beta', gamma, delta, epsilon and zeta subunits.

It localises to the cytoplasm. It is found in the golgi apparatus membrane. The protein localises to the cytoplasmic vesicle. The protein resides in the COPI-coated vesicle membrane. In terms of biological role, the coatomer is a cytosolic protein complex that binds to dilysine motifs and reversibly associates with Golgi non-clathrin-coated vesicles, which further mediate biosynthetic protein transport from the ER, via the Golgi up to the trans Golgi network. Coatomer complex is required for budding from Golgi membranes, and is essential for the retrograde Golgi-to-ER transport of dilysine-tagged proteins. The chain is Coatomer subunit gamma-2 from Oryza sativa subsp. japonica (Rice).